A 372-amino-acid polypeptide reads, in one-letter code: NAD(P)H-quinone oxidoreductase subunit 1 (372 aa).

Helical transmembrane passes span 27–47, 97–117, 128–148, 176–196, 204–224, 266–286, 308–328, and 347–367; these read IIWL…GVLV, ILFT…WLIV, VGIG…GLLM, LALS…IDIV, ILSW…ICAL, ILSA…PIPV, SIGI…AILL, and FLLP…LAFP.

It belongs to the complex I subunit 1 family. In terms of assembly, NDH-1 is composed of at least 11 different subunits.

It localises to the cellular thylakoid membrane. It carries out the reaction a plastoquinone + NADH + (n+1) H(+)(in) = a plastoquinol + NAD(+) + n H(+)(out). The enzyme catalyses a plastoquinone + NADPH + (n+1) H(+)(in) = a plastoquinol + NADP(+) + n H(+)(out). In terms of biological role, NDH-1 shuttles electrons from an unknown electron donor, via FMN and iron-sulfur (Fe-S) centers, to quinones in the respiratory and/or the photosynthetic chain. The immediate electron acceptor for the enzyme in this species is believed to be plastoquinone. Couples the redox reaction to proton translocation, and thus conserves the redox energy in a proton gradient. The chain is NAD(P)H-quinone oxidoreductase subunit 1 from Prochlorococcus marinus (strain MIT 9215).